The sequence spans 2271 residues: Serine-rich adhesin for platelets (2271 aa).

Residues 1 to 89 (MSKRQKAFHD…VNMLHDQQAF (89 aa)) form the signal peptide. The serine-rich repeat region 1, SRR1 stretch occupies residues 90–230 (AASDAPLTSE…KTSTTSTSTA (141 aa)). A compositionally biased stretch (polar residues) spans 100–111 (LNTQSETVGNQN). Residues 100 to 229 (LNTQSETVGN…NKTSTTSTST (130 aa)) are disordered. The span at 112 to 128 (STTIEASTSTADSTSVT) shows a compositional bias: low complexity. Polar residues predominate over residues 129 to 140 (KNSSSVQTSNSD). Over residues 150 to 229 (VTSTTNSTSN…NKTSTTSTST (80 aa)) the composition is skewed to low complexity. The non-repeat region (NRR) stretch occupies residues 231 to 751 (PVKLRTFSRL…TTFKYEVTRN (521 aa)). Residues 245 to 491 (FASAATTTAV…QQVQFGTFEY (247 aa)) form an L-lectin module region. Residues Asp-365, Tyr-367, Asn-369, and Asp-382 each coordinate Ca(2+). Positions 492–571 (TESAVTQVRY…NAGQSVTYYF (80 aa)) are beta-grasp module. Positions 572-659 (TDVKAPTVTV…KSTTTFTINV (88 aa)) are cadherin-like module-1. Residues Asp-573, Lys-575, Asp-601, Asn-602, Asp-645, Asp-661, Thr-663, Asp-690, Asn-691, and Asp-734 each coordinate Ca(2+). The interval 660 to 751 (VDTTAPTVTP…TTFKYEVTRN (92 aa)) is cadherin-like module-2. 2 disordered regions span residues 751-791 (NSMS…VVST) and 806-2242 (SVSA…NGLL). Low complexity-rich tracts occupy residues 752 to 791 (SMSD…VVST), 806 to 1392 (SVSA…LSLS), and 1402 to 2214 (SNSA…ATSE). Residues 752–2232 (SMSDSVSTSG…AQSEKRLPDT (1481 aa)) form a serine-rich repeat region 2, SRR2 region. Residues 2229 to 2233 (LPDTG) carry the LPXTG sorting signal motif. Thr-2232 is subject to Pentaglycyl murein peptidoglycan amidated threonine. Residues 2233–2271 (GDSIKQNGLLGGVMTLLVGLGLMKRKKKKDENDQDDSQA) constitute a propeptide, removed by sortase.

It belongs to the serine-rich repeat protein (SRRP) family. In terms of processing, proteolytically cleaved by a metalloprotease. Glycosylated. It is probable that most of the Ser residues in SSR1 and SSR2 are O-GlcNAcylated. Sequential glycosylation by sugar transferases are able to generate complex sugar polymorphisms.

The protein resides in the secreted. Its subcellular location is the cell wall. Mediates binding to human platelets, possibly through a receptor-ligand interaction. Probably associated with virulence in endovascular infection. Plays a positive role in biofilm formation, possibly by self-association via the non-repeat region (NRR or binding region, BR). Binds to and plays a role in human lung epithelial cell invasion via the L-lectin module of its NRR domain; N-acetylneuraminic acid (Neu5Ac) inhibits binding. Treatment of host cells with neuraminidase decreases adherence of S.aureus cells, suggesting SraP recognizes a host terminal Neu5Ac moiety as a receptor. In Staphylococcus aureus (strain NCTC 8325 / PS 47), this protein is Serine-rich adhesin for platelets.